We begin with the raw amino-acid sequence, 255 residues long: 4-hydroxy-tetrahydrodipicolinate reductase (255 aa).

Residues 9–14 (GFKGKM), 89–91 (GTT), and 115–118 (APNF) contribute to the NAD(+) site. The Proton donor/acceptor role is filled by H145. H146 lines the (S)-2,3,4,5-tetrahydrodipicolinate pocket. K149 serves as the catalytic Proton donor. 155–156 (GT) is a (S)-2,3,4,5-tetrahydrodipicolinate binding site.

The protein belongs to the DapB family.

Its subcellular location is the cytoplasm. The enzyme catalyses (S)-2,3,4,5-tetrahydrodipicolinate + NAD(+) + H2O = (2S,4S)-4-hydroxy-2,3,4,5-tetrahydrodipicolinate + NADH + H(+). It carries out the reaction (S)-2,3,4,5-tetrahydrodipicolinate + NADP(+) + H2O = (2S,4S)-4-hydroxy-2,3,4,5-tetrahydrodipicolinate + NADPH + H(+). It functions in the pathway amino-acid biosynthesis; L-lysine biosynthesis via DAP pathway; (S)-tetrahydrodipicolinate from L-aspartate: step 4/4. Catalyzes the conversion of 4-hydroxy-tetrahydrodipicolinate (HTPA) to tetrahydrodipicolinate. The sequence is that of 4-hydroxy-tetrahydrodipicolinate reductase from Streptococcus sanguinis (strain SK36).